A 471-amino-acid polypeptide reads, in one-letter code: tRNA modification GTPase MnmE (471 aa).

Positions 26, 83, and 136 each coordinate (6S)-5-formyl-5,6,7,8-tetrahydrofolate. A TrmE-type G domain is found at 232–393 (GLRVVLAGQP…LRRRLLQLAG (162 aa)). Position 242 (Asn-242) interacts with K(+). GTP is bound by residues 242–247 (NVGKSS), 261–267 (TPIAGTT), 286–289 (DTAG), 354–357 (NKAD), and 374–376 (SAR). Ser-246 provides a ligand contact to Mg(2+). The K(+) site is built by Thr-261, Ile-263, and Thr-266. A Mg(2+)-binding site is contributed by Thr-267. Lys-471 provides a ligand contact to (6S)-5-formyl-5,6,7,8-tetrahydrofolate.

It belongs to the TRAFAC class TrmE-Era-EngA-EngB-Septin-like GTPase superfamily. TrmE GTPase family. Homodimer. Heterotetramer of two MnmE and two MnmG subunits. The cofactor is K(+).

The protein localises to the cytoplasm. Functionally, exhibits a very high intrinsic GTPase hydrolysis rate. Involved in the addition of a carboxymethylaminomethyl (cmnm) group at the wobble position (U34) of certain tRNAs, forming tRNA-cmnm(5)s(2)U34. The chain is tRNA modification GTPase MnmE from Methylibium petroleiphilum (strain ATCC BAA-1232 / LMG 22953 / PM1).